The primary structure comprises 496 residues: Putative ammonium transporter 1 member 5 (496 aa).

A run of 11 helical transmembrane segments spans residues 50–70 (LLFS…LCAG), 85–105 (VLDA…FAFG), 131–151 (FFLY…GSIA), 156–176 (FVAY…VVSH), 202–222 (FAGS…GALI), 246–266 (LVVL…PGSF), 284–306 (GIGR…TLFG), 314–334 (WNVT…TAGC), 336–356 (VVDP…LIGC), 369–389 (LEAA…VGLF), and 422–442 (LVQI…LFFI). At S485 the chain carries Phosphoserine.

Belongs to the ammonia transporter channel (TC 1.A.11.2) family.

Its subcellular location is the membrane. Its function is as follows. Involved in ammonium transport. In Arabidopsis thaliana (Mouse-ear cress), this protein is Putative ammonium transporter 1 member 5 (AMT1-5).